The primary structure comprises 249 residues: 1-(5-phosphoribosyl)-5-[(5-phosphoribosylamino)methylideneamino] imidazole-4-carboxamide isomerase (249 aa).

The Proton acceptor role is filled by Asp8. Residue Asp129 is the Proton donor of the active site.

Belongs to the HisA/HisF family.

Its subcellular location is the cytoplasm. It carries out the reaction 1-(5-phospho-beta-D-ribosyl)-5-[(5-phospho-beta-D-ribosylamino)methylideneamino]imidazole-4-carboxamide = 5-[(5-phospho-1-deoxy-D-ribulos-1-ylimino)methylamino]-1-(5-phospho-beta-D-ribosyl)imidazole-4-carboxamide. It functions in the pathway amino-acid biosynthesis; L-histidine biosynthesis; L-histidine from 5-phospho-alpha-D-ribose 1-diphosphate: step 4/9. The polypeptide is 1-(5-phosphoribosyl)-5-[(5-phosphoribosylamino)methylideneamino] imidazole-4-carboxamide isomerase (Rhizobium rhizogenes (strain K84 / ATCC BAA-868) (Agrobacterium radiobacter)).